Here is a 154-residue protein sequence, read N- to C-terminus: Myoglobin (154 aa).

A Globin domain is found at 2-148; it reads GLSDGEWQLV…FRNDMAAKYK (147 aa). The residue at position 4 (serine 4) is a Phosphoserine. Histidine 65 provides a ligand contact to nitrite. Histidine 65 lines the O2 pocket. Threonine 68 is subject to Phosphothreonine. Residue histidine 94 coordinates heme b.

The protein belongs to the globin family. Monomeric.

The protein localises to the cytoplasm. The protein resides in the sarcoplasm. The enzyme catalyses Fe(III)-heme b-[protein] + nitric oxide + H2O = Fe(II)-heme b-[protein] + nitrite + 2 H(+). It catalyses the reaction H2O2 + AH2 = A + 2 H2O. In terms of biological role, monomeric heme protein which primary function is to store oxygen and facilitate its diffusion within muscle tissues. Reversibly binds oxygen through a pentacoordinated heme iron and enables its timely and efficient release as needed during periods of heightened demand. Depending on the oxidative conditions of tissues and cells, and in addition to its ability to bind oxygen, it also has a nitrite reductase activity whereby it regulates the production of bioactive nitric oxide. Under stress conditions, like hypoxia and anoxia, it also protects cells against reactive oxygen species thanks to its pseudoperoxidase activity. The polypeptide is Myoglobin (MB) (Saimiri sciureus (Common squirrel monkey)).